Reading from the N-terminus, the 867-residue chain is uncharacterized protein (867 aa).

The SPX domain occupies 1 to 294 (MKFSHSLQFN…GSSLRESYMK (294 aa)). Disordered regions lie at residues 105 to 152 (QGNN…GQTS) and 165 to 228 (ESTA…NNNR). Positions 138–152 (ITSSNREIYLNGQTS) are enriched in polar residues. The segment covering 198–223 (GNDDEVEEEDDDDDDEDEDEDEDEDN) has biased composition (acidic residues). The next 12 helical transmembrane spans lie at 406–426 (TIAT…FPVI), 434–454 (CLAL…PLFV), 485–505 (VIFS…FTIA), 537–557 (MFVA…VLCF), 576–596 (ILIV…PISS), 616–636 (FAVS…LLSF), 656–676 (FTGV…LWCL), 683–703 (VFGD…GTGL), 712–732 (FLWT…VVSS), 755–775 (VLLI…HIVA), 797–817 (LFVL…TSGF), and 842–862 (AGIP…TPIM).

It belongs to the CitM (TC 2.A.11) transporter family.

The protein localises to the endoplasmic reticulum membrane. This is an uncharacterized protein from Schizosaccharomyces pombe (strain 972 / ATCC 24843) (Fission yeast).